Reading from the N-terminus, the 381-residue chain is Probable tRNA sulfurtransferase (381 aa).

The region spanning 60 to 168 (REATEVLTRV…EGKAYIFVDK (109 aa)) is the THUMP domain. Residues 186–187 (LL), lysine 269, glycine 291, and glutamine 300 each bind ATP.

This sequence belongs to the ThiI family.

The protein resides in the cytoplasm. The catalysed reaction is [ThiI sulfur-carrier protein]-S-sulfanyl-L-cysteine + a uridine in tRNA + 2 reduced [2Fe-2S]-[ferredoxin] + ATP + H(+) = [ThiI sulfur-carrier protein]-L-cysteine + a 4-thiouridine in tRNA + 2 oxidized [2Fe-2S]-[ferredoxin] + AMP + diphosphate. It carries out the reaction [ThiS sulfur-carrier protein]-C-terminal Gly-Gly-AMP + S-sulfanyl-L-cysteinyl-[cysteine desulfurase] + AH2 = [ThiS sulfur-carrier protein]-C-terminal-Gly-aminoethanethioate + L-cysteinyl-[cysteine desulfurase] + A + AMP + 2 H(+). It functions in the pathway cofactor biosynthesis; thiamine diphosphate biosynthesis. Functionally, catalyzes the ATP-dependent transfer of a sulfur to tRNA to produce 4-thiouridine in position 8 of tRNAs, which functions as a near-UV photosensor. Also catalyzes the transfer of sulfur to the sulfur carrier protein ThiS, forming ThiS-thiocarboxylate. This is a step in the synthesis of thiazole, in the thiamine biosynthesis pathway. The sulfur is donated as persulfide by IscS. The sequence is that of Probable tRNA sulfurtransferase from Thermococcus kodakarensis (strain ATCC BAA-918 / JCM 12380 / KOD1) (Pyrococcus kodakaraensis (strain KOD1)).